We begin with the raw amino-acid sequence, 94 residues long: U1-theraphotoxin-Sp1a (94 aa).

Residues 1 to 22 (MIFLLPSIISVMLLAEPVLMLG) form the signal peptide. The propeptide occupies 23 to 58 (DTEDADLMEMVQLSRPFFNPIIRAVELVELREERQR). 3 disulfide bridges follow: C60/C78, C67/C83, and C77/C88. V92 carries the post-translational modification Valine amide.

This sequence belongs to the neurotoxin 14 (magi-1) family. OAIP-1 subfamily. Expressed by the venom gland.

The protein resides in the secreted. Functionally, probable ion channel inhibitor. Shows insecticidal activity. Acts synergistically with the neonicotinoid insecticide imidacloprid. Is neither a repellent that repels insects nor an attractant that is preferentially consumed by insects. Is very stable. This is U1-theraphotoxin-Sp1a from Selenotypus plumipes (Australian featherleg tarantula).